A 78-amino-acid chain; its full sequence is Transmembrane protein 258 (78 aa).

Over 1–18 (MDVMQRYVSPVNPAVFPH) the chain is Cytoplasmic. A helical membrane pass occupies residues 19–39 (LATVLLVIGTFFTAWFFIFVV). Over 40–53 (SRKSSKESTLIKEL) the chain is Cytoplasmic. The chain crosses the membrane as a helical span at residues 54 to 74 (LISLCASIFLGFGIVFLLLTV). Residues 75-78 (GIYV) are Perinuclear space-facing.

It belongs to the OST5 family. In terms of assembly, homodimer. Component of the oligosaccharyltransferase (OST) complex. Interacts with klar and Msp300, components of LINC complex.

The protein resides in the nucleus outer membrane. Its subcellular location is the cytoplasm. It is found in the endoplasmic reticulum membrane. Functionally, subunit of the oligosaccharyl transferase (OST) complex that catalyzes the initial transfer of a defined glycan (Glc(3)Man(9)GlcNAc(2) in eukaryotes) from the lipid carrier dolichol-pyrophosphate to an asparagine residue within an Asn-X-Ser/Thr consensus motif in nascent polypeptide chains, the first step in protein N-glycosylation. N-glycosylation occurs cotranslationally and the complex associates with the Sec61 complex at the channel-forming translocon complex that mediates protein translocation across the endoplasmic reticulum (ER). All subunits are required for a maximal enzyme activity. In addition may regulates nuclear envelope (NE) architecture and nuclear positioning through the linker of nucleoskeleton and cytoskeleton (LINC)-dependent and -independent mechanisms. This Drosophila melanogaster (Fruit fly) protein is Transmembrane protein 258.